We begin with the raw amino-acid sequence, 148 residues long: Transthyretin-like protein 2 (148 aa).

A signal peptide spans Met1 to Ser17. Asn77 carries an N-linked (GlcNAc...) asparagine glycan.

It belongs to the nematode transthyretin-like family.

It is found in the secreted. This chain is Transthyretin-like protein 2 (ttr-2), found in Caenorhabditis elegans.